The primary structure comprises 568 residues: Oxygen-dependent choline dehydrogenase (568 aa).

Residue 8 to 37 (DYIIIGAGSAGNTLAARLTEDAGVTVLLLE) coordinates FAD. His477 functions as the Proton acceptor in the catalytic mechanism.

Belongs to the GMC oxidoreductase family. Requires FAD as cofactor.

It catalyses the reaction choline + A = betaine aldehyde + AH2. The catalysed reaction is betaine aldehyde + NAD(+) + H2O = glycine betaine + NADH + 2 H(+). It functions in the pathway amine and polyamine biosynthesis; betaine biosynthesis via choline pathway; betaine aldehyde from choline (cytochrome c reductase route): step 1/1. Functionally, involved in the biosynthesis of the osmoprotectant glycine betaine. Catalyzes the oxidation of choline to betaine aldehyde and betaine aldehyde to glycine betaine at the same rate. The sequence is that of Oxygen-dependent choline dehydrogenase from Pseudomonas savastanoi pv. phaseolicola (strain 1448A / Race 6) (Pseudomonas syringae pv. phaseolicola (strain 1448A / Race 6)).